Reading from the N-terminus, the 184-residue chain is UPF0301 protein SPO0296 (184 aa).

Belongs to the UPF0301 (AlgH) family.

The chain is UPF0301 protein SPO0296 from Ruegeria pomeroyi (strain ATCC 700808 / DSM 15171 / DSS-3) (Silicibacter pomeroyi).